The sequence spans 205 residues: GTP cyclohydrolase 1 (205 aa).

Zn(2+) is bound by residues Cys95, His98, and Cys166.

Belongs to the GTP cyclohydrolase I family. Toroid-shaped homodecamer, composed of two pentamers of five dimers.

The enzyme catalyses GTP + H2O = 7,8-dihydroneopterin 3'-triphosphate + formate + H(+). The protein operates within cofactor biosynthesis; 7,8-dihydroneopterin triphosphate biosynthesis; 7,8-dihydroneopterin triphosphate from GTP: step 1/1. This chain is GTP cyclohydrolase 1, found in Maricaulis maris (strain MCS10) (Caulobacter maris).